The chain runs to 701 residues: ER-retained PMA1-suppressing protein 1 (701 aa).

An N-terminal signal peptide occupies residues 1-27 (MKMNLKRLVVTFFSCITFLLKFTIAAA). In terms of domain architecture, Thioredoxin 1 spans 28–142 (EPPEGFPEPL…LIAFARRESM (115 aa)). Cys-60 and Cys-63 are oxidised to a cystine. An N-linked (GlcNAc...) asparagine glycan is attached at Asn-85. A disulfide bridge connects residues Cys-200 and Cys-203. Asn-264, Asn-299, and Asn-370 each carry an N-linked (GlcNAc...) asparagine glycan. In terms of domain architecture, Thioredoxin 2 spans 408 to 446 (PTFFMFKDGDPISYVFPGYSTTEMRNIDAIMDWVKKYSN). The helical transmembrane segment at 646–666 (IIHGNGMPGYLIVIVLFIAIL) threads the bilayer.

The protein belongs to the protein disulfide isomerase family. As to quaternary structure, interacts with mutated PMA1-D378N but not wild type PMA1. Interacts with EUG1, KAR2, MPD1 and PDI1.

It is found in the endoplasmic reticulum membrane. The catalysed reaction is Catalyzes the rearrangement of -S-S- bonds in proteins.. Functionally, acts as a membrane-bound chaperone in endoplasmic reticulum quality control. Probably facilitates presentation of substrate to membrane-bound components of the degradation machinery. This Saccharomyces cerevisiae (strain ATCC 204508 / S288c) (Baker's yeast) protein is ER-retained PMA1-suppressing protein 1 (EPS1).